Reading from the N-terminus, the 264-residue chain is Proteasome assembly chaperone 2 (264 aa).

Residue T137 is modified to Phosphothreonine.

This sequence belongs to the PSMG2 family. As to quaternary structure, forms a heterodimer with PSMG1. The PSMG1-PSMG2 heterodimer interacts directly with the PSMA5 and PSMA7 proteasome alpha subunits. Post-translationally, degraded by the proteasome upon completion of 20S proteasome maturation.

The protein resides in the nucleus. In terms of biological role, chaperone protein which promotes assembly of the 20S proteasome as part of a heterodimer with PSMG1. The PSMG1-PSMG2 heterodimer binds to the PSMA5 and PSMA7 proteasome subunits, promotes assembly of the proteasome alpha subunits into the heteroheptameric alpha ring and prevents alpha ring dimerization. The chain is Proteasome assembly chaperone 2 from Mus musculus (Mouse).